Consider the following 319-residue polypeptide: MARKKIALVGSGNIGGTLAHLIGLKELGDVVMFDIAEGIPQGKGLDILESTPVEGVDCRYSGANDYSAIAGADVVIVTAGVPRKPGMSRDDLVGINLKVMAAVGEGIKKNCPGAFVICITNPLDVMVWALQHYSGVPANMIVGMAGVLDSARFRTFLCEEFNVSVEDVTAFVLGGHGDTMVPLVRYSTVAGIPLPDLVKMGWTTQEKLDQIVQRTRDGGAEIVNLLKTGSAYYAPAASGVAMAEAFLKDKKRVLPVATLVKGGTYGQPDDVFVGVPVVIGEGGVERIVEIELNAAEQAEFNKSADAVRGLVKVAKGLMG.

NAD(+) contacts are provided by residues 10 to 15 (GSGNIG) and Asp-34. Residues Arg-83 and Arg-89 each coordinate substrate. NAD(+) contacts are provided by residues Asn-96 and 119–121 (ITN). Substrate is bound by residues Asn-121 and Arg-152. His-176 (proton acceptor) is an active-site residue.

It belongs to the LDH/MDH superfamily. MDH type 3 family.

It catalyses the reaction (S)-malate + NAD(+) = oxaloacetate + NADH + H(+). Functionally, catalyzes the reversible oxidation of malate to oxaloacetate. The sequence is that of Malate dehydrogenase from Paramagnetospirillum magneticum (strain ATCC 700264 / AMB-1) (Magnetospirillum magneticum).